The chain runs to 150 residues: UPF0756 membrane protein A1S_2121 (150 aa).

Transmembrane regions (helical) follow at residues 22 to 42 (SQNAAVTIAAGILIVIKITPL), 45 to 65 (FFPYIQAHGLNLGILILTIGV), 83 to 103 (FISFKSLVAIAIGLLVAWLGG), and 115 to 135 (VVAGLLIGTVAGVALLRGVPV).

Belongs to the UPF0756 family.

It localises to the cell membrane. In Acinetobacter baumannii (strain ATCC 17978 / DSM 105126 / CIP 53.77 / LMG 1025 / NCDC KC755 / 5377), this protein is UPF0756 membrane protein A1S_2121.